Consider the following 227-residue polypeptide: Protein FAM3C (227 aa).

A signal peptide spans 1–24 (MRVAGAAKLVVAVAVFLLTFYVIS). Disulfide bonds link Cys-58/Cys-86 and Cys-64/Cys-221. One can recognise a GG-type lectin domain in the interval 67-225 (KHFAFKMASG…VEMEGCIPQK (159 aa)).

The protein belongs to the FAM3 family.

It localises to the secreted. The protein localises to the cytoplasmic vesicle. Its function is as follows. May be involved in retinal laminar formation. Promotes epithelial to mesenchymal transition. The chain is Protein FAM3C (FAM3C) from Bos taurus (Bovine).